Here is a 431-residue protein sequence, read N- to C-terminus: D-inositol 3-phosphate glycosyltransferase (431 aa).

A 1D-myo-inositol 3-phosphate-binding site is contributed by His14. UDP-N-acetyl-alpha-D-glucosamine is bound by residues 20–21 (QP) and Gly28. 1D-myo-inositol 3-phosphate is bound by residues 25-30 (DAGGMN), Lys83, Tyr116, Thr140, and Arg160. 2 residues coordinate UDP-N-acetyl-alpha-D-glucosamine: Arg240 and Lys245. The Mg(2+) site is built by Tyr315, Arg316, and Ala318. The UDP-N-acetyl-alpha-D-glucosamine site is built by Glu328 and Glu336. Residue Thr342 coordinates Mg(2+).

The protein belongs to the glycosyltransferase group 1 family. MshA subfamily. Homodimer.

The enzyme catalyses 1D-myo-inositol 3-phosphate + UDP-N-acetyl-alpha-D-glucosamine = 1D-myo-inositol 2-acetamido-2-deoxy-alpha-D-glucopyranoside 3-phosphate + UDP + H(+). Its function is as follows. Catalyzes the transfer of a N-acetyl-glucosamine moiety to 1D-myo-inositol 3-phosphate to produce 1D-myo-inositol 2-acetamido-2-deoxy-glucopyranoside 3-phosphate in the mycothiol biosynthesis pathway. In Thermomonospora curvata (strain ATCC 19995 / DSM 43183 / JCM 3096 / KCTC 9072 / NBRC 15933 / NCIMB 10081 / Henssen B9), this protein is D-inositol 3-phosphate glycosyltransferase.